We begin with the raw amino-acid sequence, 211 residues long: C-type lectin domain family 2 member L (211 aa).

The segment at 1–53 (MEPAREPPARARPPPPAARPAPAAPRPRSPAEAEARGPEGLLRRSGSGYEGST) is disordered. A compositionally biased stretch (pro residues) spans 10–28 (RARPPPPAARPAPAAPRPR). At S29 the chain carries Phosphoserine. The chain crosses the membrane as a helical span at residues 66–86 (LLLGAIAVLLFAILVVMSILA). 3 cysteine pairs are disulfide-bonded: C97-C108, C125-C205, and C184-C197. In terms of domain architecture, C-type lectin spans 104-206 (YGRKCYYFSE…CLTTRPWVCS (103 aa)).

Its subcellular location is the membrane. This chain is C-type lectin domain family 2 member L (Clec2l), found in Rattus norvegicus (Rat).